We begin with the raw amino-acid sequence, 237 residues long: Phosphoribosylaminoimidazole-succinocarboxamide synthase (237 aa).

This sequence belongs to the SAICAR synthetase family.

The catalysed reaction is 5-amino-1-(5-phospho-D-ribosyl)imidazole-4-carboxylate + L-aspartate + ATP = (2S)-2-[5-amino-1-(5-phospho-beta-D-ribosyl)imidazole-4-carboxamido]succinate + ADP + phosphate + 2 H(+). The protein operates within purine metabolism; IMP biosynthesis via de novo pathway; 5-amino-1-(5-phospho-D-ribosyl)imidazole-4-carboxamide from 5-amino-1-(5-phospho-D-ribosyl)imidazole-4-carboxylate: step 1/2. This chain is Phosphoribosylaminoimidazole-succinocarboxamide synthase, found in Listeria monocytogenes serovar 1/2a (strain ATCC BAA-679 / EGD-e).